The chain runs to 511 residues: Cytochrome P450 71A6 (511 aa).

2 helical membrane-spanning segments follow: residues 1–15 (ILIA…LFFL) and 61–77 (VMQL…ASSP). Asn-90, Asn-96, and Asn-167 each carry an N-linked (GlcNAc...) asparagine glycan. Cys-450 contributes to the heme binding site.

This sequence belongs to the cytochrome P450 family. Requires heme as cofactor.

The protein resides in the membrane. The chain is Cytochrome P450 71A6 (CYP71A6) from Nepeta racemosa (Catmint).